We begin with the raw amino-acid sequence, 452 residues long: Interferon-induced protein 44-like (452 aa).

Positions 1-159 constitute a TLDc domain; that stretch reads MEVTTRLTWN…YLECEVFRVE (159 aa).

Belongs to the IFI44 family. In terms of assembly, interacts with FKBP5; this interaction modulates IKBKB and IKBKE kinase activities.

It is found in the cytoplasm. Its function is as follows. Type I interferon-stimulated gene (ISG) that plays a critical role in antiviral and antibacterial activity. During bacterial infection, promotes macrophage differentiation and facilitates inflammatory cytokine secretion. Plays a role in the control of respiratory syncytial virus/RSV infection, reducing the ability of the virus to replicate. Exhibits a low antiviral activity against hepatitis C virus. Also acts as a feedback regulator of IFN responses by negatively regulating IKBKB and IKBKE kinase activities through interaction with FKBP5. The sequence is that of Interferon-induced protein 44-like (IFI44L) from Homo sapiens (Human).